The primary structure comprises 197 residues: Protein TIFY 9 (197 aa).

Polar residues predominate over residues 57–73; the sequence is STGNNSDSSAKSRSVPS. The tract at residues 57-84 is disordered; it reads STGNNSDSSAKSRSVPSTPREDQPQIPI. Residues 98-132 enclose the Tify domain; the sequence is LVSGTVPMTIFYNGSVSVFQVSRNKAGEIMKVANE. The Jas motif lies at 168-193; that stretch reads PIARRKSLQRFLEKRKERLVSTSPYY. A Nuclear localization signal motif is present at residues 170–177; sequence ARRKSLQR.

It belongs to the TIFY/JAZ family. Homo- and heterodimer. Interacts with MYC2, MYC3, MYC4, AFPH2/NINJA, TIFY10A/JAZ1, TIFY10B/JAZ2, TIFY6B/JAZ3, TIFY6A/JAZ4, TIFY11B/JAZ6, TIFY5A/JAZ8, TIFY7/JAZ9, TIFY3A/JAZ11 and TIFY3B/JAZ12. Isoform 1 and isoform 2 interact with COI1. Isoform 3 does not interact with COI1. Interacts with RHD6 and RSL1. Ubiquitinated. Targeted for degradation by the SCF(COI1) E3 ubiquitin ligase-proteasome pathway during jasmonate signaling.

The protein resides in the nucleus. Its function is as follows. Repressor of jasmonate (JA) responses that lacks the entire Jas domain and possesses severe JA insensitivity and resistance to JA-induced degradation. Acts as an endogenous repressor of JA signal output in JA-stimulated cells. Modulator of JA-controlled growth inhibition in response to wounding. Repressor of jasmonate (JA) responses that lacks part of the Jas domain and possesses JA insensitivity and partial resistance to JA-induced degradation. In terms of biological role, repressor of jasmonate (JA) responses. Interacts with and suppresses RHD6 and RSL1 transcription factor activities to negatively regulate jasmonate-stimulated root hair development. The protein is Protein TIFY 9 (TIFY9) of Arabidopsis thaliana (Mouse-ear cress).